We begin with the raw amino-acid sequence, 311 residues long: Mitochondrial ribosome-associated GTPase 1 (311 aa).

The region spanning 27–200 (AKGLKQMKTK…LFDTPGVLSP (174 aa)) is the CP-type G domain. GTP-binding positions include 74 to 77 (NKMD), 144 to 149 (NVGKSS), and Gly-196.

This sequence belongs to the TRAFAC class YlqF/YawG GTPase family. MTG1 subfamily.

The protein resides in the mitochondrion inner membrane. Its function is as follows. Plays a role in the regulation of the mitochondrial ribosome assembly and of translational activity. Displays mitochondrial GTPase activity. The polypeptide is Mitochondrial ribosome-associated GTPase 1 (Xenopus tropicalis (Western clawed frog)).